Consider the following 115-residue polypeptide: Nitrogenase-stabilizing/protective protein NifW (115 aa).

It belongs to the NifW family. In terms of assembly, homotrimer; associates with NifD.

Its function is as follows. May protect the nitrogenase Fe-Mo protein from oxidative damage. In Rhodopseudomonas palustris (strain BisB18), this protein is Nitrogenase-stabilizing/protective protein NifW.